Reading from the N-terminus, the 725-residue chain is MVMKAAVDDDASGWELNVPEKMEKSSTSWVDITQDFEDACRELKLGELLHDKLFGLFEAMSAIEMMDPKMDAGMIGNQVNRKVLNFEQAVKDGTIKIKDLSLPELIGIMDTCFCCLITWLEGHSLAQTVFTCLYIHNPDFIEDPAMKAFALGILKICDIAREKVNKAAVFEEEDFQSMTYGFKMANGVTDLRVTGMLKDVEDDMQRRVKSTRSRQGEERDPEVELEHQQCLAAFSRVKFTRVLLTVLIAFTKKETSAVAEAQKLMVQAADLLSAIHTSLHHGIQAQNGTTKGDHPIMMGFEPLVNQRLLPPTFPRYAKIIKREEMVNYFSRLIDRIKTVCEVVNLPNLHCILDFFCEFSEQSPCVLSRSLLQTTFLVDNKKVFGTHLMQDMVKDALRSFVSPPVLSPKCCLYNNHQAKDCIDSFVTHCVRPFCSLVQIHGHNRARQRDKLGHILEEFATLQDEAEKVDAALHTMLLKQEPQRQHLACLGTWVLYHSLRIMIQYLLSGFELELYSMHEYYYIYWYLSEFLYAWLMSTLSRADGSQMAEERIMEEQQKGRSSKKTKKKKKVRPLSREITMSQAYQNMCAGMFKTMVAFDMDGKVRKPKFELDSEQVRYEHRFAPFNSVMTPPPVHYLQFKEMSDLSKYSPPPQPPELYVAASKHFQQAKMILESIPNADREVSRILKVAKPNFVVMKLLAGGHKKESKVPPEFDFSVHKYFPVVKLV.

The segment at 548–573 (ERIMEEQQKGRSSKKTKKKKKVRPLS) is disordered. A compositionally biased stretch (basic residues) spans 558 to 571 (RSSKKTKKKKKVRP).

This sequence belongs to the MAK10 family. As to quaternary structure, component of the N-terminal acetyltransferase C (NatC) complex, which is composed of NAA35, NAA38 and NAA30. In terms of tissue distribution, expressed in primary spermatocytes, basal epidermis, interstitial fibroblasts of skeletal muscle, and intestinal crypts.

The protein resides in the cytoplasm. Auxillary component of the N-terminal acetyltransferase C (NatC) complex which catalyzes acetylation of N-terminal methionine residues. N-terminal acetylation protects proteins from ubiquitination and degradation by the N-end rule pathway. Involved in regulation of apoptosis and proliferation of smooth muscle cells. The polypeptide is N-alpha-acetyltransferase 35, NatC auxiliary subunit (Naa35) (Rattus norvegicus (Rat)).